Consider the following 225-residue polypeptide: LexA repressor (225 aa).

A DNA-binding region (H-T-H motif) is located at residues 26-46 (YEEMKDSLNLKSKSGIHRLIS). Residues S146 and K184 each act as for autocatalytic cleavage activity in the active site.

This sequence belongs to the peptidase S24 family. As to quaternary structure, homodimer.

The enzyme catalyses Hydrolysis of Ala-|-Gly bond in repressor LexA.. In terms of biological role, represses a number of genes involved in the response to DNA damage (SOS response), including recA and lexA. In the presence of single-stranded DNA, RecA interacts with LexA causing an autocatalytic cleavage which disrupts the DNA-binding part of LexA, leading to derepression of the SOS regulon and eventually DNA repair. The chain is LexA repressor from Pelagibacter ubique (strain HTCC1062).